Here is a 218-residue protein sequence, read N- to C-terminus: tRNA (guanine-N(7)-)-methyltransferase (218 aa).

The disordered stretch occupies residues 1-26 (MRLKNKPWANELVEEHPESALDRPDP). The segment covering 13 to 26 (VEEHPESALDRPDP) has biased composition (basic and acidic residues). S-adenosyl-L-methionine is bound by residues Glu45, Glu70, Asp97, and Asp119. Asp119 is a catalytic residue. Residue Lys123 coordinates substrate. Residues 125–130 (RHEKRR) are interaction with RNA. Substrate contacts are provided by residues Asp155 and 195–198 (TEYE).

This sequence belongs to the class I-like SAM-binding methyltransferase superfamily. TrmB family.

It catalyses the reaction guanosine(46) in tRNA + S-adenosyl-L-methionine = N(7)-methylguanosine(46) in tRNA + S-adenosyl-L-homocysteine. It participates in tRNA modification; N(7)-methylguanine-tRNA biosynthesis. In terms of biological role, catalyzes the formation of N(7)-methylguanine at position 46 (m7G46) in tRNA. The protein is tRNA (guanine-N(7)-)-methyltransferase of Lactobacillus delbrueckii subsp. bulgaricus (strain ATCC 11842 / DSM 20081 / BCRC 10696 / JCM 1002 / NBRC 13953 / NCIMB 11778 / NCTC 12712 / WDCM 00102 / Lb 14).